A 225-amino-acid chain; its full sequence is PKHD-type hydroxylase YbiX (225 aa).

One can recognise a Fe2OG dioxygenase domain in the interval 78–177; sequence TLSTPLFNRY…RVASFMWIQS (100 aa). Fe cation contacts are provided by His-96, Asp-98, and His-158. Arg-168 is a 2-oxoglutarate binding site.

Requires Fe(2+) as cofactor. L-ascorbate serves as cofactor.

In Shigella sonnei (strain Ss046), this protein is PKHD-type hydroxylase YbiX.